Here is a 282-residue protein sequence, read N- to C-terminus: High mobility group nucleosome-binding domain-containing protein 5 (282 aa).

The interval 1–282 is disordered; that stretch reads MPKRKAAGQG…GKKEEPQSIV (282 aa). Thr31 bears the Phosphothreonine mark. Basic residues predominate over residues 37–46; that stretch reads KRTSSSRKMK. A Glycyl lysine isopeptide (Lys-Gly) (interchain with G-Cter in SUMO2) cross-link involves residue Lys67. Phosphotyrosine is present on Tyr76. Residues 81 to 119 are compositionally biased toward basic and acidic residues; it reads KNGEAKITEAPASEKEIVEVKEENIEDATEKGGEKKEAV. Ser93 is modified (phosphoserine). Lys101 is covalently cross-linked (Glycyl lysine isopeptide (Lys-Gly) (interchain with G-Cter in SUMO1); alternate). Lys101 is covalently cross-linked (Glycyl lysine isopeptide (Lys-Gly) (interchain with G-Cter in SUMO2); alternate). Lys124 participates in a covalent cross-link: Glycyl lysine isopeptide (Lys-Gly) (interchain with G-Cter in SUMO2). Residues 125-138 are compositionally biased toward acidic residues; it reads NEEEDQKEDEEDQN. Composition is skewed to basic and acidic residues over residues 139 to 152 and 158 to 256; these read EEKG…KDEK and KEDK…KEDL. Over residues 257 to 270 the composition is skewed to acidic residues; the sequence is KEEEEGKEEDEIKE. A compositionally biased stretch (basic and acidic residues) spans 271-282; sequence DDGKKEEPQSIV.

The protein belongs to the HMGN family. As to expression, ubiquitously expressed.

The protein resides in the nucleus. In terms of biological role, preferentially binds to euchromatin and modulates cellular transcription by counteracting linker histone-mediated chromatin compaction. This chain is High mobility group nucleosome-binding domain-containing protein 5 (HMGN5), found in Homo sapiens (Human).